The sequence spans 197 residues: Recombination protein RecR (197 aa).

The C4-type zinc-finger motif lies at 56–71 (CERCNTFTETEICQRC). The 96-residue stretch at 79-174 (SLLCVVEMPA…RVSRLSRGVP (96 aa)) folds into the Toprim domain.

It belongs to the RecR family.

May play a role in DNA repair. It seems to be involved in an RecBC-independent recombinational process of DNA repair. It may act with RecF and RecO. This chain is Recombination protein RecR, found in Aromatoleum aromaticum (strain DSM 19018 / LMG 30748 / EbN1) (Azoarcus sp. (strain EbN1)).